We begin with the raw amino-acid sequence, 665 residues long: MVSELLLELFSEEIPAFMQKNAEEGYLKIFTKIFEENEIFAKVQVFAGPRRITLHATHVPKVILPKEEEIKGPSIEAPEIAINGFCKAHNVSKLDLSTKLRNNKLYYFFVKKTKERETKEILPKIIIDAINKYSWTKSMFWGCYKIKWIRPLRNILCIFDGEILPLRFGHLSTNNITYGHRLTNNKKLEIIDFENYRNKLLENNVILERLKREEIIKVGLLELANAQNLNIKQDVCLIEEVTGLSEFPIVLLGKIPQKFLELPEEVIVSVMRTHQKYFCLFDKNGSFAPYFLFVINGRFVNTELIIQGNEKVLSARLADALYFYKNDIAKTLESRLDKLKSVIFHTKLGSLKEKVDRITDICRYIAPDNIDLIMAAKLCKSDLVSDMVGEFPDLQGIMGYYYAKHEELNEEVAKAIRDHYKPQGLNDNVPSGNATLLALADKLDSLVGLIIVGETPNGSGDPYALRRQALGIIRIIIENKLEINFINLISFSVSLYKVSSNSHLDSVISFFEERAKFYFKNDYDITLINAVLDLNLVDTKFKLDTLKEFLVQDVGKQLLNAYKRVSNIMGNQKITGLVDASLFSTQYEKELFEVIQKISQQIIVIIANKDYQKALNLLSSLLKPITSFFDNVLVNDSDPKIAQNRLSLLQNTCEVFDKVAKFCRL.

Belongs to the class-II aminoacyl-tRNA synthetase family. Tetramer of two alpha and two beta subunits.

It is found in the cytoplasm. The catalysed reaction is tRNA(Gly) + glycine + ATP = glycyl-tRNA(Gly) + AMP + diphosphate. The chain is Glycine--tRNA ligase beta subunit (glyS) from Rickettsia prowazekii (strain Madrid E).